A 196-amino-acid polypeptide reads, in one-letter code: Ribonuclease HII (196 aa).

The region spanning 1 to 196 (MVTIGVDEAG…FAPVAQLQLL (196 aa)) is the RNase H type-2 domain. 3 residues coordinate a divalent metal cation: aspartate 7, glutamate 8, and aspartate 103.

This sequence belongs to the RNase HII family. Requires Mn(2+) as cofactor. Mg(2+) is required as a cofactor.

It is found in the cytoplasm. The catalysed reaction is Endonucleolytic cleavage to 5'-phosphomonoester.. Endonuclease that specifically degrades the RNA of RNA-DNA hybrids. The sequence is that of Ribonuclease HII from Novosphingobium aromaticivorans (strain ATCC 700278 / DSM 12444 / CCUG 56034 / CIP 105152 / NBRC 16084 / F199).